The chain runs to 322 residues: NADH-quinone oxidoreductase subunit H (322 aa).

Transmembrane regions (helical) follow at residues 12-32 (IGKA…MSFI), 79-99 (IFIL…AVVP), 111-131 (VGLL…LFAG), 151-171 (LSYE…TGSF), 183-203 (LWNV…GVAV), 234-254 (FFVG…TLFF), 262-282 (LPPF…FILL), and 301-321 (VCLP…LMNV).

It belongs to the complex I subunit 1 family. NDH-1 is composed of 13 different subunits. Subunits NuoA, H, J, K, L, M, N constitute the membrane sector of the complex.

The protein localises to the cell inner membrane. The enzyme catalyses a quinone + NADH + 5 H(+)(in) = a quinol + NAD(+) + 4 H(+)(out). In terms of biological role, NDH-1 shuttles electrons from NADH, via FMN and iron-sulfur (Fe-S) centers, to quinones in the respiratory chain. The immediate electron acceptor for the enzyme in this species is believed to be ubiquinone. Couples the redox reaction to proton translocation (for every two electrons transferred, four hydrogen ions are translocated across the cytoplasmic membrane), and thus conserves the redox energy in a proton gradient. This subunit may bind ubiquinone. This Shewanella oneidensis (strain ATCC 700550 / JCM 31522 / CIP 106686 / LMG 19005 / NCIMB 14063 / MR-1) protein is NADH-quinone oxidoreductase subunit H.